The chain runs to 406 residues: UPF0754 membrane protein CYB_2931 (406 aa).

The next 2 membrane-spanning stretches (helical) occupy residues 1–21 (MAFW…YFTN) and 385–405 (IVNL…LFLL).

This sequence belongs to the UPF0754 family.

It is found in the cell inner membrane. The chain is UPF0754 membrane protein CYB_2931 from Synechococcus sp. (strain JA-2-3B'a(2-13)) (Cyanobacteria bacterium Yellowstone B-Prime).